The primary structure comprises 746 residues: Iron-sulfur clusters transporter ABCB7, mitochondrial (746 aa).

The transit peptide at 1–19 directs the protein to the mitochondrion; the sequence is MAPMLVSLNCGIRVQRRTL. Topologically, residues 20–133 are mitochondrial matrix; sequence TLLIRQTSSY…KDRPDLRARV (114 aa). Positions 133–429 constitute an ABC transmembrane type-1 domain; sequence VAVSLGLLAG…LGTVYRETRQ (297 aa). Residues 134 to 154 form a helical membrane-spanning segment; the sequence is AVSLGLLAGAKLTNVMVPFMF. Topologically, residues 155–176 are mitochondrial intermembrane; the sequence is KYAVDELNQMSGHMLNLNDAPS. The helical transmembrane segment at 177-199 threads the bilayer; that stretch reads TVATMTTAVLIGYGVSRAGSALF. The Mitochondrial matrix portion of the chain corresponds to 200-252; sequence NELRNTVFGKVAQSSIRRIAKNVFLHLHNLDLGFHLSRQTGALSKAIDRGTRG. The helical transmembrane segment at 253-273 threads the bilayer; that stretch reads ISFVLSALVFNLGPTVFEMFL. The Mitochondrial intermembrane portion of the chain corresponds to 274 to 283; that stretch reads VSAILYYKCG. Residues 284 to 304 form a helical membrane-spanning segment; sequence GEFAAVALGTLSAYTIFTILV. The Mitochondrial matrix segment spans residues 305-375; sequence TQWRTRFRIE…TLAMLNFGQS (71 aa). Residues 308–312 and 371–374 contribute to the glutathione site; these read RTRFR and NFGQ. Residues 376–396 traverse the membrane as a helical segment; sequence AIFSVGLTAIMLLASKGIAAG. Over 397-402 the chain is Mitochondrial intermembrane; the sequence is NMTVGD. Residues 403–423 traverse the membrane as a helical segment; that stretch reads LVMVNGLLFQLSLPLNFLGTV. Glutathione is bound at residue G421. The Mitochondrial matrix portion of the chain corresponds to 424–746; the sequence is YRETRQALID…SVKGCGNCSC (323 aa). An ABC transporter domain is found at 465–699; sequence IRFEDVYFEY…PGSLYAELWN (235 aa). ATP contacts are provided by residues Y474 and 498-505; that span reads GGSGSGKS. Residues 708 to 728 are disordered; it reads SRKSSSAPAAERLSQKEEERK.

Belongs to the ABC transporter superfamily. ABCB family. Heavy Metal importer (TC 3.A.1.210) subfamily. In terms of assembly, homodimer.

Its subcellular location is the mitochondrion inner membrane. It localises to the mitochondrion. It carries out the reaction (glutathione)4[2Fe(III)-2S] cluster(in) + ATP + H2O = (glutathione)4[2Fe(III)-2S] cluster(out) + ADP + phosphate + H(+). Its function is as follows. Exports glutathione-coordinated iron-sulfur clusters such as [2Fe-2S]-(GS)4 cluster from the mitochondria to the cytosol in an ATP-dependent manner allowing the assembly of the cytosolic iron-sulfur (Fe/S) cluster-containing proteins and participates in iron homeostasis. May play a role in iron and lipid metabolism. This chain is Iron-sulfur clusters transporter ABCB7, mitochondrial, found in Oryzias latipes (Japanese rice fish).